We begin with the raw amino-acid sequence, 480 residues long: V-type ATP synthase beta chain 2 (480 aa).

It belongs to the ATPase alpha/beta chains family.

Its function is as follows. Produces ATP from ADP in the presence of a proton gradient across the membrane. The V-type beta chain is a regulatory subunit. The sequence is that of V-type ATP synthase beta chain 2 (atpB2) from Treponema pallidum (strain Nichols).